Reading from the N-terminus, the 302-residue chain is Olfactory receptor 51H1 (302 aa).

At 1-27 the chain is on the extracellular side; it reads MTNLNASQANHRNFILTGIPGTPDKNP. A glycan (N-linked (GlcNAc...) asparagine) is linked at Asn5. A helical transmembrane segment spans residues 28-48; it reads WLAFPLGFLYTLTLLGNGTIL. At 49-56 the chain is on the cytoplasmic side; sequence AVIKVEPS. The chain crosses the membrane as a helical span at residues 57–77; it reads LHEPTYYFLSILALTDVSLSM. The Extracellular segment spans residues 78 to 101; the sequence is STLPSMLSIYWFNAPQIVFDACIM. A disulfide bond links Cys99 and Cys191. Residues 102 to 122 form a helical membrane-spanning segment; the sequence is QMFFIHVFGIVESGVLVSMAF. The Cytoplasmic portion of the chain corresponds to 123–141; that stretch reads DRFVAIRNPLHYVSILTHD. Residues 142–162 form a helical membrane-spanning segment; the sequence is VIRKTGIAVLTRAVCVVFPVP. Over 163–198 the chain is Extracellular; that stretch reads FLIKCLPFCHSNVLSHSYCLHQNMMRLACASTRINS. A helical membrane pass occupies residues 199-219; that stretch reads LYGLIVVIFTLGLDVLLTLLS. Residues 220-239 are Cytoplasmic-facing; it reads YVLTLKTVLGIVSRGERLKT. The chain crosses the membrane as a helical span at residues 240 to 260; sequence LSTCLSHMSTVLLFYVPFMGA. The Extracellular segment spans residues 261–276; it reads ASMIHRFWEHLSPVVH. A helical membrane pass occupies residues 277–297; that stretch reads MVMADIYLLLPPVLNPIVYSV. The Cytoplasmic segment spans residues 298–302; sequence KTKQI.

Belongs to the G-protein coupled receptor 1 family.

The protein localises to the cell membrane. In terms of biological role, odorant receptor. This Homo sapiens (Human) protein is Olfactory receptor 51H1 (OR51H1).